A 931-amino-acid polypeptide reads, in one-letter code: MSDNEEDYDIARSLTVNLEDSDSDSGSDFSDEEQEVQDIISSEDEAEEQPKKKQKTAKPAKEAFPSLELSGDEDEQDDDKDMASYFAANNPQAKKAKAGSFQSFGLSKLVLTNIAKKGYRQPTPIQRKTIPLIMANRDVVGMARTGSGKTAAFTLPVIEKLKGHSARVGIRAIILSPSRELALQTYKQVKEFSKGSDLRAIVLTGGDSLEDQFSSMVSNPDIVIATPGRFLHLQVEMQLDLKTVEYIVFDEADHLFEQGFAEQLNELLAVLPPQRQSLLFSATLPRSLVDFAKAGLSNPVLVRLDADSKISDQLQMAFFTTKKNEREANLLYVLQEVIKMPLGTAEQIKKLRLMDKRVNDEAEEEELENESGSKRKYKFKKERLPSANVLPSPHSTIVFVPTKHHVEYITTLLRDAGYLVSYIYGTLDQHARKNQLYQFRLGMTTVLVVTDVAARGIDIPVLANVVNYTLPGSSKIFIHRVGRTARAGNKGWAYSIVNEKELPYLLDLELFLGKKILLTAMQEQKCQLLKDKQGDNYVEPKVQYTDRLVLGSCPRLSLETFEELYENLLRNHYELSVIKEVAAKGEKLYYRTRKAASTESVKRAKEIMDTGTWDDQHLLFGPNLEKEKEKFLAKLANRHVKETVFEFNKKGNDRDEDSLVSFMHRRRKQLAPIQRRASERRDLLQREREAGLTHGIEDEILKAHGETGYSASGINDVDEEELQNAFEDADQLSSKSNKKNYRDDRFFISHYAPASVIQDQQLNITSSFANEAASATFDLDNDDKIGNGKQVMQWDRKKGKYINSQSTDKKFIIGESGAKIPATYRSGKFDEWKKKRNMQPAKVGSLETEGESKQRFKHKRNAAPKLPDKYRDDYHKQKKKVEKAVESGRDVKGYHKPGQRSEIKSTEDIRKARLLKEKKMAKNARPSRKRK.

The interval 1–78 (MSDNEEDYDI…LSGDEDEQDD (78 aa)) is disordered. Residues 19-47 (EDSDSDSGSDFSDEEQEVQDIISSEDEAE) show a composition bias toward acidic residues. The Q motif motif lies at 99 to 127 (GSFQSFGLSKLVLTNIAKKGYRQPTPIQR). One can recognise a Helicase ATP-binding domain in the interval 130–302 (IPLIMANRDV…KAGLSNPVLV (173 aa)). 143-150 (ARTGSGKT) serves as a coordination point for ATP. A DEAD box motif is present at residues 250–253 (DEAD). Residues 372–532 (GSKRKYKFKK…EQKCQLLKDK (161 aa)) form the Helicase C-terminal domain. Residues 836 to 910 (RNMQPAKVGS…SEIKSTEDIR (75 aa)) are disordered. Composition is skewed to basic and acidic residues over residues 866-875 (LPDKYRDDYH) and 882-910 (EKAVESGRDVKGYHKPGQRSEIKSTEDIR).

The protein belongs to the DEAD box helicase family. DDX54/DBP10 subfamily.

It localises to the nucleus. Its subcellular location is the nucleolus. The catalysed reaction is ATP + H2O = ADP + phosphate + H(+). Functionally, ATP-binding RNA helicase involved in the biogenesis of 60S ribosomal subunits and is required for the normal formation of 25S and 5.8S rRNAs. In Scheffersomyces stipitis (strain ATCC 58785 / CBS 6054 / NBRC 10063 / NRRL Y-11545) (Yeast), this protein is ATP-dependent RNA helicase DBP10 (DBP10).